The following is an 878-amino-acid chain: AP-5 complex subunit beta-1 (878 aa).

The segment at 234-260 (RLQPQAPSWPAAEEGEGERSLTAREHS) is disordered. Basic and acidic residues predominate over residues 250–260 (GERSLTAREHS).

Probably part of the adaptor protein complex 5 (AP-5), a tetramer composed of AP5B1, AP5M1, AP5S1 and AP5Z1. Interacts with ZFYVE26 and SPG11.

In terms of biological role, as part of AP-5, a probable fifth adaptor protein complex it may be involved in endosomal transport. The polypeptide is AP-5 complex subunit beta-1 (AP5B1) (Homo sapiens (Human)).